Consider the following 89-residue polypeptide: Small ribosomal subunit protein bS20 (89 aa).

Residues 1 to 12 are compositionally biased toward basic residues; sequence MANIKSAKKRAK. The interval 1 to 24 is disordered; sequence MANIKSAKKRAKQTVVRNERNTGQ.

This sequence belongs to the bacterial ribosomal protein bS20 family.

Its function is as follows. Binds directly to 16S ribosomal RNA. This is Small ribosomal subunit protein bS20 from Xanthomonas campestris pv. campestris (strain 8004).